Here is a 158-residue protein sequence, read N- to C-terminus: MRPLSVQSKFEDVATSTSVNHHGVTPQSPWHSPVPYLFGGLAAMLGLIAFALLILACSYWRLSSSGEEDGQNVDEEKESRSGDKAANGAYEEKFLVIMAGEDLPRYLATPAMKKCTCGGHEGKMVISQEESVAKEEEKMREGEEEKVKDTGETTTTSH.

Residues 1 to 36 (MRPLSVQSKFEDVATSTSVNHHGVTPQSPWHSPVPY) lie on the Extracellular side of the membrane. A helical membrane pass occupies residues 37 to 57 (LFGGLAAMLGLIAFALLILAC). The Cytoplasmic segment spans residues 58–158 (SYWRLSSSGE…DTGETTTTSH (101 aa)). The segment at 65 to 85 (SGEEDGQNVDEEKESRSGDKA) is disordered. The span at 66-76 (GEEDGQNVDEE) shows a compositional bias: acidic residues. The VIMAG motif lies at 96-100 (VIMAG). The disordered stretch occupies residues 126-158 (ISQEESVAKEEEKMREGEEEKVKDTGETTTTSH). The span at 131-151 (SVAKEEEKMREGEEEKVKDTG) shows a compositional bias: basic and acidic residues.

This sequence belongs to the GLUTAMINE DUMPER 1 (TC 9.B.60) family. As to quaternary structure, interacts with LOG2. Post-translationally, ubiquitinated by LOG2 (in vitro). As to expression, expressed in the vascular tissues and in hydathodes. Expressed in the phloem and xylem (at the protein level).

The protein localises to the cell membrane. Functionally, probable subunit of an amino acid transporter involved in the regulation of the amino acid metabolism. Stimulates amino acid export by activating nonselective amino acid facilitators. Required the interaction with the RING-type E3 ubiquitin-protein ligase LOG2 to fulfill its function. Plays a role in the Gln export at hydathodes, at xylem parenchyma into xylem sap and from mesophyll into leaf apoplasm. Acts upstream genes involved in the salicylic acid (SA) pathway and in the geminivirus-host interaction. The protein is Protein GLUTAMINE DUMPER 1 (GDU1) of Arabidopsis thaliana (Mouse-ear cress).